Here is a 258-residue protein sequence, read N- to C-terminus: Tetratricopeptide repeat protein 33 (258 aa).

3 TPR repeats span residues 59–92 (SKRL…TPGD), 93–126 (AALY…NPHF), and 127–160 (VEAW…CPAN). The tract at residues 231-258 (SASGSENLSDRKEDKVETNDSKEFIKAR) is disordered. Basic and acidic residues predominate over residues 238–258 (LSDRKEDKVETNDSKEFIKAR).

This is Tetratricopeptide repeat protein 33 (ttc33) from Xenopus laevis (African clawed frog).